We begin with the raw amino-acid sequence, 227 residues long: Lectin (227 aa).

An N-terminal signal peptide occupies residues 1-28; sequence MTMTSTTTKAMAMAAAVLAAAAVAATNA. Glutamine 29 bears the Pyrrolidone carboxylic acid mark. 4 consecutive Chitin-binding type-1 domains span residues 29-70, 71-113, 114-156, and 157-199; these read QTCG…ACCS, SQRC…PCRA, DIKC…ACCP, and EKRC…GCYK. Cystine bridges form between cysteine 31-cysteine 46, cysteine 40-cysteine 52, cysteine 45-cysteine 59, cysteine 63-cysteine 68, cysteine 74-cysteine 89, cysteine 83-cysteine 95, cysteine 88-cysteine 102, cysteine 106-cysteine 111, cysteine 117-cysteine 132, cysteine 126-cysteine 138, cysteine 131-cysteine 145, cysteine 149-cysteine 154, cysteine 160-cysteine 175, cysteine 169-cysteine 181, cysteine 174-cysteine 188, and cysteine 192-cysteine 197. 38–40 contributes to the substrate binding site; sequence MIC. 90 to 101 contributes to the substrate binding site; that stretch reads SQYGYCGFGSEY. 142–143 is a substrate binding site; the sequence is SE. The propeptide occupies 202–227; it reads DGMAAILANNQSVSFEGIIESVAELV. Asparagine 211 is a glycosylation site (N-linked (GlcNAc...) asparagine).

Confined to root caps, several cell layers at the periphery of the coleorhiza and radicle, and in all cell layers of the coleoptile.

Its function is as follows. N-acetyl-D-glucosamine binding lectin. This Oryza sativa subsp. japonica (Rice) protein is Lectin.